The chain runs to 95 residues: uncharacterized protein (95 aa).

This is an uncharacterized protein from Acheta domesticus (House cricket).